The primary structure comprises 483 residues: Protein DETOXIFICATION 6 (483 aa).

Transmembrane regions (helical) follow at residues 38 to 58 (ALPMATVTVAQYLLPVISVMV), 69 to 89 (GVALATSFTNVSGFSVMFGLA), 113 to 133 (FSAIVSNVPIVVLISILWFYM), 146 to 166 (ISKVAGSYAVCLIPALLAQAV), 187 to 207 (AITTLLFHIPVCLILVYAFGL), 211 to 231 (GAALAIGLSYWFNVLILALYV), 263 to 283 (AAMTTIEWSLFEFLILSSGLL), 292 to 312 (VLSICLTTSSLHYVIPMGIGA), 334 to 354 (VFAGIFLWFLEATICSTLLFI), 376 to 396 (LSPLLCISFLVDGFSAVLGGV), 405 to 425 (IGAWANVVAYYLLGAPVGLFL), and 436 to 456 (LWIGVVVGSTAQGIILAIVTA).

It belongs to the multi antimicrobial extrusion (MATE) (TC 2.A.66.1) family.

It is found in the membrane. This Arabidopsis thaliana (Mouse-ear cress) protein is Protein DETOXIFICATION 6.